The chain runs to 189 residues: UPF0301 protein PA14_05290 (189 aa).

This sequence belongs to the UPF0301 (AlgH) family.

The polypeptide is UPF0301 protein PA14_05290 (Pseudomonas aeruginosa (strain UCBPP-PA14)).